The following is a 427-amino-acid chain: Enolase 2 (427 aa).

Q165 provides a ligand contact to (2R)-2-phosphoglycerate. E207 serves as the catalytic Proton donor. Mg(2+)-binding residues include D244, E287, and D314. The (2R)-2-phosphoglycerate site is built by K339, R368, S369, and K390. Residue K339 is the Proton acceptor of the active site.

The protein belongs to the enolase family. Component of the RNA degradosome, a multiprotein complex involved in RNA processing and mRNA degradation. It depends on Mg(2+) as a cofactor.

It is found in the cytoplasm. The protein resides in the secreted. Its subcellular location is the cell surface. The catalysed reaction is (2R)-2-phosphoglycerate = phosphoenolpyruvate + H2O. It functions in the pathway carbohydrate degradation; glycolysis; pyruvate from D-glyceraldehyde 3-phosphate: step 4/5. Its function is as follows. Catalyzes the reversible conversion of 2-phosphoglycerate (2-PG) into phosphoenolpyruvate (PEP). It is essential for the degradation of carbohydrates via glycolysis. The chain is Enolase 2 from Pseudomonas syringae pv. tomato (strain ATCC BAA-871 / DC3000).